The sequence spans 549 residues: CTP synthase (549 aa).

The tract at residues 1–272 is amidoligase domain; that stretch reads MPPKSTTTKH…DAYVVRKLDL (272 aa). Residue Ser-19 participates in CTP binding. UTP is bound at residue Ser-19. ATP-binding positions include 20–25 and Asp-77; that span reads SLGKGL. 2 residues coordinate Mg(2+): Asp-77 and Glu-146. Residues 153–155, 193–198, and Lys-229 contribute to the CTP site; these read DIE and KTKPTQ. UTP is bound by residues 193–198 and Lys-229; that span reads KTKPTQ. The region spanning 297-548 is the Glutamine amidotransferase type-1 domain; sequence NLALVGKYID…VKAAVERKTG (252 aa). L-glutamine is bound at residue Gly-360. Catalysis depends on Cys-387, which acts as the Nucleophile; for glutamine hydrolysis. L-glutamine contacts are provided by residues 388-391, Glu-411, and Arg-473; that span reads LGLQ. Residues His-521 and Glu-523 contribute to the active site.

The protein belongs to the CTP synthase family. In terms of assembly, homotetramer.

It catalyses the reaction UTP + L-glutamine + ATP + H2O = CTP + L-glutamate + ADP + phosphate + 2 H(+). The enzyme catalyses L-glutamine + H2O = L-glutamate + NH4(+). The catalysed reaction is UTP + NH4(+) + ATP = CTP + ADP + phosphate + 2 H(+). It participates in pyrimidine metabolism; CTP biosynthesis via de novo pathway; CTP from UDP: step 2/2. Its activity is regulated as follows. Allosterically activated by GTP, when glutamine is the substrate; GTP has no effect on the reaction when ammonia is the substrate. The allosteric effector GTP functions by stabilizing the protein conformation that binds the tetrahedral intermediate(s) formed during glutamine hydrolysis. Inhibited by the product CTP, via allosteric rather than competitive inhibition. In terms of biological role, catalyzes the ATP-dependent amination of UTP to CTP with either L-glutamine or ammonia as the source of nitrogen. Regulates intracellular CTP levels through interactions with the four ribonucleotide triphosphates. The protein is CTP synthase of Streptomyces avermitilis (strain ATCC 31267 / DSM 46492 / JCM 5070 / NBRC 14893 / NCIMB 12804 / NRRL 8165 / MA-4680).